The primary structure comprises 544 residues: Protein anon-37Cs (544 aa).

Its subcellular location is the cytoplasm. In terms of biological role, has a non-vital function. This Drosophila lebanonensis (Fruit fly) protein is Protein anon-37Cs (anon-37Cs).